We begin with the raw amino-acid sequence, 179 residues long: Large ribosomal subunit protein uL6 (179 aa).

Belongs to the universal ribosomal protein uL6 family. In terms of assembly, part of the 50S ribosomal subunit.

This protein binds to the 23S rRNA, and is important in its secondary structure. It is located near the subunit interface in the base of the L7/L12 stalk, and near the tRNA binding site of the peptidyltransferase center. In Clostridium novyi (strain NT), this protein is Large ribosomal subunit protein uL6.